Reading from the N-terminus, the 1485-residue chain is Chromosome partition protein MukB (1485 aa).

34-41 (GGNGAGKS) provides a ligand contact to ATP. Coiled coils occupy residues 337–480 (LNLV…QAYQ), 509–605 (QHLA…PVWL), 780–805 (RAAR…ATLS), 835–915 (EAEI…IQQH), 977–1116 (GMLT…AKAG), and 1210–1235 (EAIE…KLAI). The interval 666–783 (PSGAEDARLI…EVPLFGRAAR (118 aa)) is flexible hinge.

Belongs to the SMC family. MukB subfamily. Homodimerization via its hinge domain. Binds to DNA via its C-terminal region. Interacts, and probably forms a ternary complex, with MukE and MukF via its C-terminal region. The complex formation is stimulated by calcium or magnesium. Interacts with tubulin-related protein FtsZ.

The protein resides in the cytoplasm. Its subcellular location is the nucleoid. Plays a central role in chromosome condensation, segregation and cell cycle progression. Functions as a homodimer, which is essential for chromosome partition. Involved in negative DNA supercoiling in vivo, and by this means organize and compact chromosomes. May achieve or facilitate chromosome segregation by condensation DNA from both sides of a centrally located replisome during cell division. The chain is Chromosome partition protein MukB from Yersinia pestis bv. Antiqua (strain Antiqua).